We begin with the raw amino-acid sequence, 420 residues long: 3-phosphoshikimate 1-carboxyvinyltransferase (420 aa).

K20, S21, and R25 together coordinate 3-phosphoshikimate. Phosphoenolpyruvate is bound at residue K20. Phosphoenolpyruvate is bound at residue R119. Residues S161, S162, Q163, S189, D303, Q326, and K330 each coordinate 3-phosphoshikimate. Position 163 (Q163) interacts with phosphoenolpyruvate. The active-site Proton acceptor is the D303. Residues R334, R375, and K400 each contribute to the phosphoenolpyruvate site.

The protein belongs to the EPSP synthase family. In terms of assembly, monomer.

The protein resides in the cytoplasm. It carries out the reaction 3-phosphoshikimate + phosphoenolpyruvate = 5-O-(1-carboxyvinyl)-3-phosphoshikimate + phosphate. It participates in metabolic intermediate biosynthesis; chorismate biosynthesis; chorismate from D-erythrose 4-phosphate and phosphoenolpyruvate: step 6/7. In terms of biological role, catalyzes the transfer of the enolpyruvyl moiety of phosphoenolpyruvate (PEP) to the 5-hydroxyl of shikimate-3-phosphate (S3P) to produce enolpyruvyl shikimate-3-phosphate and inorganic phosphate. The sequence is that of 3-phosphoshikimate 1-carboxyvinyltransferase from Dehalococcoides mccartyi (strain ATCC BAA-2100 / JCM 16839 / KCTC 5957 / BAV1).